The following is a 422-amino-acid chain: Biofilm regulator 1 (422 aa).

Composition is skewed to low complexity over residues M1–A19 and S36–S45. 2 disordered regions span residues M1–P86 and R116–P207. A compositionally biased stretch (polar residues) spans A46–I61. Composition is skewed to low complexity over residues T69–P81 and P120–V143. A compositionally biased stretch (polar residues) spans V146 to A159. The segment covering S160–P194 has biased composition (low complexity). The span at T195–S205 shows a compositional bias: polar residues. A GATA-type zinc finger spans residues C282 to C307.

In terms of assembly, interacts with HDA1.

Its subcellular location is the nucleus. Transcription factor required for hyphal growth, biofilm formation, and virulence. Promotes formation of both conventional and pheromone-stimulated biofilms. Binds and recruits HDA1 to promoters of hypha-specific genes in a rapamycin-dependent manner. Involved in the switch between two heritable states, the white and opaque states. These two cell types differ in many characteristics, including cell structure, mating competence, and virulence. Each state is heritable for many generations, and switching between states occurs stochastically at low frequency. The protein is Biofilm regulator 1 (BRG1) of Candida albicans (strain SC5314 / ATCC MYA-2876) (Yeast).